A 131-amino-acid chain; its full sequence is Fumarate reductase subunit C (131 aa).

3 helical membrane-spanning segments follow: residues 30–50 (EGTA…LFAL), 57–77 (WAGF…LITL), and 109–129 (IIKS…FVAL).

This sequence belongs to the FrdC family. In terms of assembly, part of an enzyme complex containing four subunits: a flavoprotein (FrdA), an iron-sulfur protein (FrdB), and two hydrophobic anchor proteins (FrdC and FrdD).

It localises to the cell inner membrane. Functionally, two distinct, membrane-bound, FAD-containing enzymes are responsible for the catalysis of fumarate and succinate interconversion; fumarate reductase is used in anaerobic growth, and succinate dehydrogenase is used in aerobic growth. Anchors the catalytic components of the fumarate reductase complex to the cell inner membrane, binds quinones. The polypeptide is Fumarate reductase subunit C (Shigella flexneri).